A 422-amino-acid polypeptide reads, in one-letter code: Dihydroorotase (422 aa).

2 residues coordinate Zn(2+): His-61 and His-63. Residues 63–65 (HLR) and Asn-95 each bind substrate. Position 153 (Asp-153) interacts with Zn(2+). Asn-278 serves as a coordination point for substrate. Residue Asp-305 coordinates Zn(2+). Residue Asp-305 is part of the active site. Residues His-309 and 322–323 (PG) each bind substrate.

This sequence belongs to the metallo-dependent hydrolases superfamily. DHOase family. Class I DHOase subfamily. In terms of assembly, monomer. Forms a 1:1 stoichiometric complex with PyrB. The complex exists as an equilibrium mixture of heterohexamers, composed of 3 PyrC and 3 PyrB subunits, and dodecamers. The complex has both DHOase and ATCase activities. Requires Zn(2+) as cofactor.

The catalysed reaction is (S)-dihydroorotate + H2O = N-carbamoyl-L-aspartate + H(+). The protein operates within pyrimidine metabolism; UMP biosynthesis via de novo pathway; (S)-dihydroorotate from bicarbonate: step 3/3. Its activity is regulated as follows. The monomer has very low activity by itself. Activated several thousandfold by formation of a complex with PyrB aspartate carbamoyltransferase (ATCase). In terms of biological role, catalyzes the reversible cyclization of carbamoyl aspartate to dihydroorotate. In Aquifex aeolicus (strain VF5), this protein is Dihydroorotase.